A 402-amino-acid chain; its full sequence is Pyridinium-3,5-bisthiocarboxylic acid mononucleotide nickel insertion protein (402 aa).

The protein belongs to the LarC family.

The enzyme catalyses Ni(II)-pyridinium-3,5-bisthiocarboxylate mononucleotide = pyridinium-3,5-bisthiocarboxylate mononucleotide + Ni(2+). Functionally, involved in the biosynthesis of a nickel-pincer cofactor ((SCS)Ni(II) pincer complex). Binds Ni(2+), and functions in nickel delivery to pyridinium-3,5-bisthiocarboxylic acid mononucleotide (P2TMN), to form the mature cofactor. Is thus probably required for the activation of nickel-pincer cofactor-dependent enzymes. In Thermotoga sp. (strain RQ2), this protein is Pyridinium-3,5-bisthiocarboxylic acid mononucleotide nickel insertion protein.